Consider the following 185-residue polypeptide: ATP-dependent protease subunit HslV (185 aa).

Thr2 is an active-site residue. Na(+)-binding residues include Gly157, Cys160, and Thr163.

Belongs to the peptidase T1B family. HslV subfamily. A double ring-shaped homohexamer of HslV is capped on each side by a ring-shaped HslU homohexamer. The assembly of the HslU/HslV complex is dependent on binding of ATP.

It is found in the cytoplasm. The catalysed reaction is ATP-dependent cleavage of peptide bonds with broad specificity.. Allosterically activated by HslU binding. Functionally, protease subunit of a proteasome-like degradation complex believed to be a general protein degrading machinery. This chain is ATP-dependent protease subunit HslV, found in Vibrio cholerae serotype O1 (strain ATCC 39315 / El Tor Inaba N16961).